A 369-amino-acid chain; its full sequence is 4-hydroxy-3-methylbut-2-en-1-yl diphosphate synthase (flavodoxin) (369 aa).

Cys270, Cys273, Cys305, and Glu312 together coordinate [4Fe-4S] cluster.

This sequence belongs to the IspG family. [4Fe-4S] cluster serves as cofactor.

The enzyme catalyses (2E)-4-hydroxy-3-methylbut-2-enyl diphosphate + oxidized [flavodoxin] + H2O + 2 H(+) = 2-C-methyl-D-erythritol 2,4-cyclic diphosphate + reduced [flavodoxin]. It participates in isoprenoid biosynthesis; isopentenyl diphosphate biosynthesis via DXP pathway; isopentenyl diphosphate from 1-deoxy-D-xylulose 5-phosphate: step 5/6. Converts 2C-methyl-D-erythritol 2,4-cyclodiphosphate (ME-2,4cPP) into 1-hydroxy-2-methyl-2-(E)-butenyl 4-diphosphate. This is 4-hydroxy-3-methylbut-2-en-1-yl diphosphate synthase (flavodoxin) from Pseudomonas entomophila (strain L48).